Reading from the N-terminus, the 373-residue chain is tRNA-specific 2-thiouridylase MnmA (373 aa).

ATP-binding positions include 12-19 (GMSGGVDS) and M38. Positions 98-100 (NPD) are interaction with target base in tRNA. C103 serves as the catalytic Nucleophile. An intrachain disulfide couples C103 to C200. G128 contributes to the ATP binding site. The tract at residues 150–152 (KDQ) is interaction with tRNA. The active-site Cysteine persulfide intermediate is C200. The segment at 312-313 (RY) is interaction with tRNA.

It belongs to the MnmA/TRMU family. Interacts with TusE.

The protein resides in the cytoplasm. The catalysed reaction is S-sulfanyl-L-cysteinyl-[protein] + uridine(34) in tRNA + AH2 + ATP = 2-thiouridine(34) in tRNA + L-cysteinyl-[protein] + A + AMP + diphosphate + H(+). Functionally, catalyzes the 2-thiolation of uridine at the wobble position (U34) of tRNA(Lys), tRNA(Glu) and tRNA(Gln), leading to the formation of s(2)U34, the first step of tRNA-mnm(5)s(2)U34 synthesis. Sulfur is provided by IscS, via a sulfur-relay system. Binds ATP and its substrate tRNAs. This Yersinia enterocolitica serotype O:8 / biotype 1B (strain NCTC 13174 / 8081) protein is tRNA-specific 2-thiouridylase MnmA.